Here is a 646-residue protein sequence, read N- to C-terminus: Phosphomethylpyrimidine synthase (646 aa).

Substrate is bound by residues Asn-235, Met-264, Tyr-293, His-329, 349–351 (SRG), 390–393 (DGLR), and Glu-429. Residue His-433 participates in Zn(2+) binding. Tyr-456 is a substrate binding site. His-497 is a binding site for Zn(2+). The [4Fe-4S] cluster site is built by Cys-577, Cys-580, and Cys-585.

It belongs to the ThiC family. Homodimer. Requires [4Fe-4S] cluster as cofactor.

The catalysed reaction is 5-amino-1-(5-phospho-beta-D-ribosyl)imidazole + S-adenosyl-L-methionine = 4-amino-2-methyl-5-(phosphooxymethyl)pyrimidine + CO + 5'-deoxyadenosine + formate + L-methionine + 3 H(+). Its pathway is cofactor biosynthesis; thiamine diphosphate biosynthesis. In terms of biological role, catalyzes the synthesis of the hydroxymethylpyrimidine phosphate (HMP-P) moiety of thiamine from aminoimidazole ribotide (AIR) in a radical S-adenosyl-L-methionine (SAM)-dependent reaction. In Vibrio campbellii (strain ATCC BAA-1116), this protein is Phosphomethylpyrimidine synthase.